The sequence spans 723 residues: Host cell factor 2 (723 aa).

4 Kelch repeats span residues 34–79 (LMII…GFVC), 83–130 (RILV…RLGH), 207–255 (KMYV…VIGN), and 257–305 (MYIF…DSQE). Fibronectin type-III domains are found at residues 357-436 (PPAP…ANCT), 516-606 (TPSN…TCIP), and 608-720 (FPGA…SKKA). The disordered stretch occupies residues 398–472 (AASPDASAAP…VALHSPLAPN (75 aa)). Over residues 419-433 (QGSNSILHNSVSDPA) the composition is skewed to polar residues.

In terms of assembly, binds KMT2A/MLL1. Component of the MLL1/MLL complex, at least composed of KMT2A/MLL1, ASH2L, RBBP5, DPY30, WDR5, MEN1, HCFC1 and HCFC2. Interacts with TASOR.

It localises to the cytoplasm. Its subcellular location is the nucleus. The polypeptide is Host cell factor 2 (Hcfc2) (Rattus norvegicus (Rat)).